Reading from the N-terminus, the 219-residue chain is Ribosome maturation factor RimP (219 aa).

A disordered region spans residues 195–219 (EGRIPGDDLGAEPEDVASTETQEKK).

The protein belongs to the RimP family.

The protein resides in the cytoplasm. Required for maturation of 30S ribosomal subunits. The sequence is that of Ribosome maturation factor RimP from Brucella abortus (strain S19).